Here is a 382-residue protein sequence, read N- to C-terminus: UBP1-associated proteins 1B (382 aa).

Positions 1-99 (MAKEGEERKK…SDESEEIVDS (99 aa)) are disordered. A compositionally biased stretch (basic residues) spans 10–22 (KEKKEKKERKERK). Basic and acidic residues predominate over residues 23–34 (RREAEELAVREK). The region spanning 163–248 (RNIFVRGLGW…RPFNSGKPRE (86 aa)) is the RRM domain.

It localises to the nucleus. Its function is as follows. Acts as a component of a complex regulating the turnover of mRNAs in the nucleus. Binds with high affinity to RNA molecules that contain U-rich sequences in 3'-UTRs. May function in complex with UBP1 and contribute to the stabilization of mRNAs in the nucleus. This is UBP1-associated proteins 1B (UBA1B) from Arabidopsis thaliana (Mouse-ear cress).